The primary structure comprises 440 residues: Phosphatidylcholine-sterol acyltransferase (440 aa).

Positions 1 to 24 (MGPPGSPWQWVPLLLGLLLPPAAP) are cleaved as a signal peptide. An N-linked (GlcNAc...) asparagine glycan is attached at Asn44. The cysteines at positions 74 and 98 are disulfide-linked. A glycan (N-linked (GlcNAc...) asparagine) is linked at Asn108. Ser205 functions as the Nucleophile in the catalytic mechanism. A glycan (N-linked (GlcNAc...) asparagine) is linked at Asn296. An intrachain disulfide couples Cys337 to Cys380. Active-site charge relay system residues include Asp369 and His401. N-linked (GlcNAc...) asparagine glycosylation occurs at Asn408.

Belongs to the AB hydrolase superfamily. Lipase family. Most abundant in liver and cerebellum.

The protein localises to the secreted. It catalyses the reaction a sterol + a 1,2-diacyl-sn-glycero-3-phosphocholine = a sterol ester + a 1-acyl-sn-glycero-3-phosphocholine. With respect to regulation, APOA1 is the most potent activator in plasma. Also activated by APOE, APOC1 and APOA4. Functionally, central enzyme in the extracellular metabolism of plasma lipoproteins. Synthesized mainly in the liver and secreted into plasma where it converts cholesterol and phosphatidylcholines (lecithins) to cholesteryl esters and lysophosphatidylcholines on the surface of high and low density lipoproteins (HDLs and LDLs). The cholesterol ester is then transported back to the liver. Has a preference for plasma 16:0-18:2 or 18:O-18:2 phosphatidylcholines. Also produced in the brain by primary astrocytes, and esterifies free cholesterol on nascent APOE-containing lipoproteins secreted from glia and influences cerebral spinal fluid (CSF) APOE- and APOA1 levels. Together with APOE and the cholesterol transporter ABCA1, plays a key role in the maturation of glial-derived, nascent lipoproteins. Required for remodeling high-density lipoprotein particles into their spherical forms. This Papio anubis (Olive baboon) protein is Phosphatidylcholine-sterol acyltransferase (LCAT).